The primary structure comprises 553 residues: Hydroxylamine reductase (553 aa).

[2Fe-2S] cluster-binding residues include Cys-3, Cys-6, Cys-18, and Cys-25. Residues His-252, Glu-276, Cys-320, Cys-408, Cys-436, Cys-461, Glu-495, and Lys-497 each coordinate hybrid [4Fe-2O-2S] cluster. Cys-408 bears the Cysteine persulfide mark.

The protein belongs to the HCP family. The cofactor is [2Fe-2S] cluster. It depends on hybrid [4Fe-2O-2S] cluster as a cofactor.

Its subcellular location is the cytoplasm. The enzyme catalyses A + NH4(+) + H2O = hydroxylamine + AH2 + H(+). In terms of biological role, catalyzes the reduction of hydroxylamine to form NH(3) and H(2)O. The polypeptide is Hydroxylamine reductase (Vibrio vulnificus (strain YJ016)).